The chain runs to 368 residues: Decarboxylase yanB (368 aa).

Zn(2+)-binding residues include H7, H9, and H159. N169 is a glycosylation site (N-linked (GlcNAc...) asparagine). D283 contacts Zn(2+). Residues 339–359 (WGAFSACLLLPVGLSALYSVL) traverse the membrane as a helical segment.

It belongs to the metallo-dependent hydrolases superfamily. ACMSD family.

It is found in the membrane. It catalyses the reaction 6-methylsalicylate + H(+) = 3-methylphenol + CO2. Its pathway is secondary metabolite biosynthesis; terpenoid biosynthesis. Functionally, decarboxylase; part of the gene cluster that mediates the biosynthesis of yanuthone D, a fungal isoprenoid epoxycyclohexenone that acts as an antibiotic against fungi and bacteria. The first step of the pathway is the synthesis of 6-methylsalicylic acid (6-MSA) by the polyketide synthase yanA. 6-MSA is then converted to m-cresol by the decarboxylase yanB. The cytochrome P450 monooxygenase yanC then catalyzes the oxidation of m-cresol to toluquinol. Epoxidation of toluquinol is then performed by the short chain dehydrogenase yanD, with the help of yanE, and a further prenylation by yanG leads to 7-deacetoxyyanuthone A. The next step is the hydroxylation of C-22 of 7-deacetoxyyanuthone A by the cytochrome P450 monooxygenase yanH to yield 22-deacetylyanuthone A. O-Mevalon transferase yanI then attaches mevalon to the hydroxyl group of 22-deacetylyanuthone A to produce yanuthone E. Finally, the FAD-dependent monooxygenase yanF oxidizes the hydroxyl group at C15 of yanuthone E to form yanuthone D. Furthermore, several branching points in the pathway lead to the production of yanuthones F and G from 7-deacetoxyyanuthone A; yanuthones H and I from 22-deacetylyanuthone A; and yanuthone J from yanuthone E. In Aspergillus niger (strain ATCC 1015 / CBS 113.46 / FGSC A1144 / LSHB Ac4 / NCTC 3858a / NRRL 328 / USDA 3528.7), this protein is Decarboxylase yanB.